The sequence spans 251 residues: Small ribosomal subunit protein uS2 (251 aa).

The protein belongs to the universal ribosomal protein uS2 family.

The chain is Small ribosomal subunit protein uS2 from Synechococcus sp. (strain ATCC 27144 / PCC 6301 / SAUG 1402/1) (Anacystis nidulans).